Reading from the N-terminus, the 549-residue chain is Small ribosomal subunit protein bS1 (549 aa).

6 S1 motif domains span residues 21–87 (GSIV…LSRE), 105–171 (KATV…VSRR), 192–260 (GSEV…LGLK), 277–347 (NSKL…LGLK), 364–434 (GDKV…LGIK), and 451–512 (GAVV…LSVK).

This sequence belongs to the bacterial ribosomal protein bS1 family.

Functionally, binds mRNA; thus facilitating recognition of the initiation point. It is needed to translate mRNA with a short Shine-Dalgarno (SD) purine-rich sequence. The sequence is that of Small ribosomal subunit protein bS1 (rpsA) from Haemophilus influenzae (strain ATCC 51907 / DSM 11121 / KW20 / Rd).